The primary structure comprises 208 residues: Large ribosomal subunit protein uL4 (208 aa).

The segment at 46 to 97 (QGTHKTKTRAEVRGGGKKPYRQKGTGNARQGSSRSPIMVGGGTIFGPQPRSY) is disordered. Positions 69 to 80 (GTGNARQGSSRS) are enriched in polar residues.

It belongs to the universal ribosomal protein uL4 family. In terms of assembly, part of the 50S ribosomal subunit.

Its function is as follows. One of the primary rRNA binding proteins, this protein initially binds near the 5'-end of the 23S rRNA. It is important during the early stages of 50S assembly. It makes multiple contacts with different domains of the 23S rRNA in the assembled 50S subunit and ribosome. Functionally, forms part of the polypeptide exit tunnel. This is Large ribosomal subunit protein uL4 from Chlorobaculum parvum (strain DSM 263 / NCIMB 8327) (Chlorobium vibrioforme subsp. thiosulfatophilum).